Here is a 129-residue protein sequence, read N- to C-terminus: uncharacterized protein (129 aa).

Residues 85–108 (SSAADSDDSSSCSECDSDALLSDD) show a composition bias toward low complexity. Residues 85–110 (SSAADSDDSSSCSECDSDALLSDDGP) form a disordered region.

This is an uncharacterized protein from Microplitis demolitor (Parasitoid wasp).